Here is an 81-residue protein sequence, read N- to C-terminus: U1-sicaritoxin-Li1c (81 aa).

Residues 1–16 (ARGDAEKWESLISEER) constitute a propeptide that is removed on maturation. Intrachain disulfides connect Cys18/Cys35, Cys26/Cys40, Cys34/Cys53, and Cys42/Cys51. Arg62 bears the Arginine amide mark. A propeptide spanning residues 66–81 (ALMLDPETHRLLFSED) is cleaved from the precursor.

Belongs to the neurotoxin 28 (Litx) family. As to expression, expressed by the venom gland.

It localises to the secreted. Its function is as follows. Toxin active against insects (S.frugiperda larvae). May act on sodium (Nav) or calcium (Cav) channels. The polypeptide is U1-sicaritoxin-Li1c (Loxosceles intermedia (Brown spider)).